Reading from the N-terminus, the 209-residue chain is Uridine kinase (209 aa).

ATP is bound at residue 12–19 (GGSGSGKT).

It belongs to the uridine kinase family.

The protein localises to the cytoplasm. The enzyme catalyses uridine + ATP = UMP + ADP + H(+). It carries out the reaction cytidine + ATP = CMP + ADP + H(+). The protein operates within pyrimidine metabolism; CTP biosynthesis via salvage pathway; CTP from cytidine: step 1/3. Its pathway is pyrimidine metabolism; UMP biosynthesis via salvage pathway; UMP from uridine: step 1/1. In Streptococcus mutans serotype c (strain ATCC 700610 / UA159), this protein is Uridine kinase.